A 347-amino-acid chain; its full sequence is Cell shape-determining protein MreB (347 aa).

ATP-binding positions include 19 to 21, 168 to 170, 216 to 219, and 296 to 299; these read TAN, GGT, ERIK, and GGAL.

Belongs to the FtsA/MreB family. As to quaternary structure, forms polymers.

The protein localises to the cytoplasm. Functionally, forms membrane-associated dynamic filaments that are essential for cell shape determination. Acts by regulating cell wall synthesis and cell elongation, and thus cell shape. A feedback loop between cell geometry and MreB localization may maintain elongated cell shape by targeting cell wall growth to regions of negative cell wall curvature. The protein is Cell shape-determining protein MreB of Escherichia coli O6:H1 (strain CFT073 / ATCC 700928 / UPEC).